We begin with the raw amino-acid sequence, 656 residues long: Chaperone protein HtpG (656 aa).

The segment at 1-359 (MSAQVEQLEF…AEDMSLNVSR (359 aa)) is a; substrate-binding. The interval 360-575 (EILQQNRQIN…AFGITPALAR (216 aa)) is b. Residues 576 to 656 (IYRASGQDVP…LLADLLSRSM (81 aa)) are c.

The protein belongs to the heat shock protein 90 family. Homodimer.

It localises to the cytoplasm. Its function is as follows. Molecular chaperone. Has ATPase activity. The chain is Chaperone protein HtpG from Mycobacterium leprae (strain TN).